A 379-amino-acid chain; its full sequence is Cytochrome b (379 aa).

The next 4 helical transmembrane spans lie at 34–54, 78–99, 114–134, and 179–199; these read FGSLLGICLITQILTGLLLAM, WLIRNLHANGASFFFICIYLHI, WNTGVVLLLTLMATAFVGYVL, and FFALHFLLPFLIAGITLIHLT. Heme b is bound by residues H84 and H98. The heme b site is built by H183 and H197. Residue H202 participates in a ubiquinone binding. A run of 4 helical transmembrane segments spans residues 227–247, 289–309, 321–341, and 348–368; these read LKDALGFALMFIPLLTLAFFS, LGGVLALAASVLILFLIPFLH, LSQILFWLLVANLLILTWIGS, and FIIIGQMASFSYFLILLVLFP.

This sequence belongs to the cytochrome b family. In terms of assembly, the cytochrome bc1 complex contains 11 subunits: 3 respiratory subunits (MT-CYB, CYC1 and UQCRFS1), 2 core proteins (UQCRC1 and UQCRC2) and 6 low-molecular weight proteins (UQCRH/QCR6, UQCRB/QCR7, UQCRQ/QCR8, UQCR10/QCR9, UQCR11/QCR10 and a cleavage product of UQCRFS1). This cytochrome bc1 complex then forms a dimer. It depends on heme b as a cofactor.

It is found in the mitochondrion inner membrane. In terms of biological role, component of the ubiquinol-cytochrome c reductase complex (complex III or cytochrome b-c1 complex) that is part of the mitochondrial respiratory chain. The b-c1 complex mediates electron transfer from ubiquinol to cytochrome c. Contributes to the generation of a proton gradient across the mitochondrial membrane that is then used for ATP synthesis. In Rhea americana (Greater rhea), this protein is Cytochrome b (MT-CYB).